Reading from the N-terminus, the 174-residue chain is Mediator of RNA polymerase II transcription subunit 30 (174 aa).

Residues 113 to 166 (VEDDSSKLEDRMANQLRAASEERREVLEVNKKLKQKNQQLKMIMDQLRNLIWEI) are a coiled coil.

Belongs to the Mediator complex subunit 30 family. In terms of assembly, component of the Mediator complex.

The protein resides in the nucleus. Component of the Mediator complex, a coactivator involved in the regulated transcription of nearly all RNA polymerase II-dependent genes. Mediator functions as a bridge to convey information from gene-specific regulatory proteins to the basal RNA polymerase II transcription machinery. Mediator is recruited to promoters by direct interactions with regulatory proteins and serves as a scaffold for the assembly of a functional preinitiation complex with RNA polymerase II and the general transcription factors. The protein is Mediator of RNA polymerase II transcription subunit 30 (med30) of Danio rerio (Zebrafish).